A 95-amino-acid polypeptide reads, in one-letter code: Aspartyl/glutamyl-tRNA(Asn/Gln) amidotransferase subunit C (95 aa).

Belongs to the GatC family. In terms of assembly, heterotrimer of A, B and C subunits.

It carries out the reaction L-glutamyl-tRNA(Gln) + L-glutamine + ATP + H2O = L-glutaminyl-tRNA(Gln) + L-glutamate + ADP + phosphate + H(+). It catalyses the reaction L-aspartyl-tRNA(Asn) + L-glutamine + ATP + H2O = L-asparaginyl-tRNA(Asn) + L-glutamate + ADP + phosphate + 2 H(+). Allows the formation of correctly charged Asn-tRNA(Asn) or Gln-tRNA(Gln) through the transamidation of misacylated Asp-tRNA(Asn) or Glu-tRNA(Gln) in organisms which lack either or both of asparaginyl-tRNA or glutaminyl-tRNA synthetases. The reaction takes place in the presence of glutamine and ATP through an activated phospho-Asp-tRNA(Asn) or phospho-Glu-tRNA(Gln). The chain is Aspartyl/glutamyl-tRNA(Asn/Gln) amidotransferase subunit C from Azoarcus sp. (strain BH72).